A 158-amino-acid polypeptide reads, in one-letter code: UPF0329 protein ECU06_0050 (158 aa).

This sequence belongs to the UPF0329 family.

This Encephalitozoon cuniculi (strain GB-M1) (Microsporidian parasite) protein is UPF0329 protein ECU06_0050.